The following is a 304-amino-acid chain: Homoserine kinase (304 aa).

ATP is bound at residue 90 to 100; the sequence is PLARGLGSSAS.

This sequence belongs to the GHMP kinase family. Homoserine kinase subfamily.

The protein localises to the cytoplasm. It carries out the reaction L-homoserine + ATP = O-phospho-L-homoserine + ADP + H(+). Its pathway is amino-acid biosynthesis; L-threonine biosynthesis; L-threonine from L-aspartate: step 4/5. Its function is as follows. Catalyzes the ATP-dependent phosphorylation of L-homoserine to L-homoserine phosphate. This is Homoserine kinase from Staphylococcus aureus (strain MSSA476).